The sequence spans 218 residues: Peptide methionine sulfoxide reductase MsrA (218 aa).

Cys-57 is a catalytic residue.

Belongs to the MsrA Met sulfoxide reductase family.

The catalysed reaction is L-methionyl-[protein] + [thioredoxin]-disulfide + H2O = L-methionyl-(S)-S-oxide-[protein] + [thioredoxin]-dithiol. It catalyses the reaction [thioredoxin]-disulfide + L-methionine + H2O = L-methionine (S)-S-oxide + [thioredoxin]-dithiol. In terms of biological role, has an important function as a repair enzyme for proteins that have been inactivated by oxidation. Catalyzes the reversible oxidation-reduction of methionine sulfoxide in proteins to methionine. This chain is Peptide methionine sulfoxide reductase MsrA, found in Brucella melitensis biotype 2 (strain ATCC 23457).